A 1128-amino-acid polypeptide reads, in one-letter code: Translation initiation factor IF-2 (1128 aa).

Residues 57–519 form a disordered region; that stretch reads NSDKQILSIN…KETTRQRQKR (463 aa). Over residues 70–83 the composition is skewed to basic and acidic residues; that stretch reads NKKDNYKQNKEDKS. The segment covering 100-110 has biased composition (low complexity); sequence KKQLLNKPLNK. Residues 120 to 146 show a composition bias toward polar residues; that stretch reads QLKNPNKPNIYNSSQSQANLTNQNTKS. A compositionally biased stretch (basic and acidic residues) spans 147 to 158; it reads KPSEHFNKDKKT. Over residues 182–196 the composition is skewed to low complexity; sequence KNINNNLKSNESSKN. Residues 201 to 214 show a composition bias toward basic and acidic residues; it reads GDKRELSLKPDQNR. 2 stretches are compositionally biased toward polar residues: residues 243–267 and 386–397; these read KQNN…NRPG and AKTNNQKQNIES. A compositionally biased stretch (basic and acidic residues) spans 432–445; that stretch reads RKDWDDSAKLEALR. Residues 499-519 are compositionally biased toward basic residues; that stretch reads HKSTKQFKKKKKETTRQRQKR. Residues 620-792 enclose the tr-type G domain; sequence KRPPVITVMG…ILLVSEVEDL (173 aa). The interval 629–636 is G1; the sequence is GHVDHGKT. 629 to 636 provides a ligand contact to GTP; it reads GHVDHGKT. Residues 654–658 form a G2 region; sequence GITQH. The tract at residues 679–682 is G3; it reads DTPG. GTP-binding positions include 679–683 and 733–736; these read DTPGH and NKID. Residues 733-736 are G4; that stretch reads NKID. The G5 stretch occupies residues 769 to 771; sequence SAI.

This sequence belongs to the TRAFAC class translation factor GTPase superfamily. Classic translation factor GTPase family. IF-2 subfamily.

Its subcellular location is the cytoplasm. Functionally, one of the essential components for the initiation of protein synthesis. Protects formylmethionyl-tRNA from spontaneous hydrolysis and promotes its binding to the 30S ribosomal subunits. Also involved in the hydrolysis of GTP during the formation of the 70S ribosomal complex. The polypeptide is Translation initiation factor IF-2 (Prochlorococcus marinus (strain MIT 9312)).